Reading from the N-terminus, the 1108-residue chain is Probable arabinosyltransferase A (1108 aa).

13 helical membrane passes run 12–34, 204–223, 258–280, 334–356, 368–387, 397–414, 421–443, 463–482, 531–553, 582–604, 616–638, 653–675, and 696–718; these read IPRS…VPLL, IVMV…LAVL, VGLA…HVVG, VWMR…HWVL, ANRV…WLPF, IALG…AIAL, AVAV…AVAA, GLLA…LVVV, FAVL…RGHV, WAVQ…AFAC, TLYV…GWFY, IASH…LAAW, and VLAS…ASLT. The interval 804–825 is disordered; sequence PGLVNSDASPNKPNVAYSDSAG.

This sequence belongs to the emb family.

It localises to the cell membrane. Functionally, arabinosyl transferase responsible for the polymerization of arabinose into the arabinan of arabinogalactan. The protein is Probable arabinosyltransferase A (embA) of Mycobacterium avium.